Here is a 116-residue protein sequence, read N- to C-terminus: uncharacterized protein (116 aa).

This is an uncharacterized protein from Acheta domesticus (House cricket).